Here is a 215-residue protein sequence, read N- to C-terminus: Large ribosomal subunit protein uL4c (215 aa).

Polar residues predominate over residues 48–57 (SQRQGTISTK). The disordered stretch occupies residues 48 to 85 (SQRQGTISTKTRSEVRGGGRKPWRQKGTGRARAGSSRS). A compositionally biased stretch (basic residues) spans 65 to 76 (GGRKPWRQKGTG).

This sequence belongs to the universal ribosomal protein uL4 family. As to quaternary structure, part of the 50S ribosomal subunit.

The protein localises to the plastid. It is found in the chloroplast. In terms of biological role, probably binds the 23S rRNA. The protein is Large ribosomal subunit protein uL4c (rpl4) of Trieres chinensis (Marine centric diatom).